A 430-amino-acid polypeptide reads, in one-letter code: Vitamin B6 salvage pathway transcriptional repressor PtsJ (430 aa).

Positions 4–72 (GKTANEIFDS…GRNGTVIKGS (69 aa)) constitute an HTH gntR-type domain. Positions 32–51 (VRELASELKVNRNTVAAAYK) form a DNA-binding region, H-T-H motif. The interval 70-95 (KGSPSPVALEGGDPHTPLHDLSGGNP) is disordered. Lys282 is subject to N6-(pyridoxal phosphate)lysine.

This sequence in the C-terminal section; belongs to the class-I pyridoxal-phosphate-dependent aminotransferase family. Homodimer in both apo- and holo-forms.

Its function is as follows. Acts as a transcriptional repressor of the pdxK gene, encoding a pyridoxal kinase involved in the vitamin B6 salvage pathway. Also represses transcription of its own gene. Binds to the ptsJ-pdxK intergenic region, but does not bind pdxY and pdxH promoters. Among all six B6 vitamers, only pyridoxal 5'-phosphate (PLP) clearly binds to the protein and acts as an effector molecule for PtsJ, inducing a protein conformational change that increases affinity for DNA. Thus, PLP stabilizes protein-DNA interactions, reinforcing repression. The sequence is that of Vitamin B6 salvage pathway transcriptional repressor PtsJ from Salmonella typhimurium (strain LT2 / SGSC1412 / ATCC 700720).